We begin with the raw amino-acid sequence, 328 residues long: DNA polymerase IV (328 aa).

The UmuC domain maps to 6–187; that stretch reads IIHIDMDYFF…LDIGDFPGVG (182 aa). Mg(2+)-binding residues include Asp-10 and Asp-105. Glu-106 is a catalytic residue.

Belongs to the DNA polymerase type-Y family. As to quaternary structure, monomer. Requires Mg(2+) as cofactor.

Its subcellular location is the cytoplasm. The enzyme catalyses DNA(n) + a 2'-deoxyribonucleoside 5'-triphosphate = DNA(n+1) + diphosphate. Its function is as follows. Poorly processive, error-prone DNA polymerase involved in untargeted mutagenesis. Copies undamaged DNA at stalled replication forks, which arise in vivo from mismatched or misaligned primer ends. These misaligned primers can be extended by PolIV. Exhibits no 3'-5' exonuclease (proofreading) activity. May be involved in translesional synthesis, in conjunction with the beta clamp from PolIII. The chain is DNA polymerase IV from Staphylococcus aureus (strain bovine RF122 / ET3-1).